Here is a 119-residue protein sequence, read N- to C-terminus: Large ribosomal subunit protein uL18 (119 aa).

Belongs to the universal ribosomal protein uL18 family. Part of the 50S ribosomal subunit; part of the 5S rRNA/L5/L18/L25 subcomplex. Contacts the 5S and 23S rRNAs.

In terms of biological role, this is one of the proteins that bind and probably mediate the attachment of the 5S RNA into the large ribosomal subunit, where it forms part of the central protuberance. This is Large ribosomal subunit protein uL18 from Xanthomonas oryzae pv. oryzae (strain MAFF 311018).